Reading from the N-terminus, the 413-residue chain is Argininosuccinate synthase (413 aa).

ATP contacts are provided by residues 14–22 (AYSGGLDTS) and alanine 41. L-citrulline is bound by residues tyrosine 94 and serine 99. Glycine 124 provides a ligand contact to ATP. Residues threonine 126, asparagine 130, and aspartate 131 each contribute to the L-aspartate site. Asparagine 130 serves as a coordination point for L-citrulline. Positions 134, 185, 194, 270, and 282 each coordinate L-citrulline.

The protein belongs to the argininosuccinate synthase family. Type 1 subfamily. As to quaternary structure, homotetramer.

It localises to the cytoplasm. The enzyme catalyses L-citrulline + L-aspartate + ATP = 2-(N(omega)-L-arginino)succinate + AMP + diphosphate + H(+). It functions in the pathway amino-acid biosynthesis; L-arginine biosynthesis; L-arginine from L-ornithine and carbamoyl phosphate: step 2/3. This Hyphomonas neptunium (strain ATCC 15444) protein is Argininosuccinate synthase.